The primary structure comprises 60 residues: Large ribosomal subunit protein bL32 (60 aa).

The protein belongs to the bacterial ribosomal protein bL32 family.

This is Large ribosomal subunit protein bL32 from Desulfovibrio desulfuricans (strain ATCC 27774 / DSM 6949 / MB).